The following is a 757-amino-acid chain: MRERGEMREAKAPLIAEAAEHISHSHGSGSSGTGSHTSGGGGGWRGSRQYQRRSDALAYGNRYQKAAALVDLAEDGVGIPEDVLNDTRFERAMRFYFVYLRLDWLWSLNLFALILLNFLEKPLWCRGYSQHACDQRDLYFLGQLPYLSKTESLIYEGLTLVILVMDIFYPLSYEGLNLFWKNTINKLKVLLLFILACDILVFAFSPQPFRVAPYIRVAFLIMNIRELRMCAVTLVGMVGTYLNVLALSLLFLLFASWLAYVTFEDTPQGKTVFSSYGTTLYQMFILFTTSNNPDVWVPAYKSSRWSSLFFIVYVLLGVYFLTNLILAVIYDSFKEQLAKQVSQADCTRKSILEKAFGIIDATGQGYLNKEQCLSLLDELNKYRSLPKTSREDFELIFAELDQSGDFKVTSEEFATLCNTIAIKFQKEPPPSYLEKYPSFYHSALCEWLKSFVRSPLFEYIVIFVLLMNLVAVIIETTLDIENSSSQKVWQEVEFVFGWIYVIEMALKIFSLGFGAYWMEGQNKFDFVLTWTIFIGETLTFAFPSKLSFLSNGEWIRYLLLGRMLRLTRILLQVRRFRAFVATFFTLMSSLMPYLGIVFCTLCIYCSLGLQIFGGIVYAGNPTLEETDLFSNDYLLFNFNDYPSGMVTLFNLLVMGNWQAWMESYRQLTGSYWSLIYFVSFYLISVLLLLNLIVAFVLEAFFAEMELEKDGEADIQDPTLEGRNRRRSVRVRTKGTMVDILLHHMLSNELDGSQNRDQ.

The Cytoplasmic portion of the chain corresponds to 1–94; sequence MRERGEMREA…NDTRFERAMR (94 aa). Residues 24-48 are disordered; sequence HSHGSGSSGTGSHTSGGGGGWRGSR. Positions 29–45 are enriched in gly residues; it reads GSSGTGSHTSGGGGGWR. A helical membrane pass occupies residues 95–115; sequence FYFVYLRLDWLWSLNLFALIL. Topologically, residues 116 to 152 are extracellular; sequence LNFLEKPLWCRGYSQHACDQRDLYFLGQLPYLSKTES. Residues 153–173 traverse the membrane as a helical segment; it reads LIYEGLTLVILVMDIFYPLSY. Residues 174-188 are Cytoplasmic-facing; that stretch reads EGLNLFWKNTINKLK. The chain crosses the membrane as a helical span at residues 189–209; the sequence is VLLLFILACDILVFAFSPQPF. A topological domain (extracellular) is located at residue R210. Residues 211–228 traverse the membrane as a helical; Voltage-sensor segment; it reads VAPYIRVAFLIMNIRELR. At 229–233 the chain is on the cytoplasmic side; that stretch reads MCAVT. The helical transmembrane segment at 234-254 threads the bilayer; it reads LVGMVGTYLNVLALSLLFLLF. Topologically, residues 255–270 are extracellular; the sequence is ASWLAYVTFEDTPQGK. The pore-forming intramembrane region spans 271-285; the sequence is TVFSSYGTTLYQMFI. The Extracellular portion of the chain corresponds to 286–308; the sequence is LFTTSNNPDVWVPAYKSSRWSSL. The chain crosses the membrane as a helical span at residues 309–329; sequence FFIVYVLLGVYFLTNLILAVI. The Cytoplasmic segment spans residues 330–453; sequence YDSFKEQLAK…LCEWLKSFVR (124 aa). 2 consecutive EF-hand domains span residues 347-382 and 388-423; these read TRKS…LNKY and TSRE…IAIK. A helical transmembrane segment spans residues 454–474; sequence SPLFEYIVIFVLLMNLVAVII. The Extracellular segment spans residues 475–493; that stretch reads ETTLDIENSSSQKVWQEVE. A glycan (N-linked (GlcNAc...) asparagine) is linked at N482. The chain crosses the membrane as a helical span at residues 494 to 514; sequence FVFGWIYVIEMALKIFSLGFG. Residues 515 to 523 lie on the Cytoplasmic side of the membrane; it reads AYWMEGQNK. The chain crosses the membrane as a helical span at residues 524-544; that stretch reads FDFVLTWTIFIGETLTFAFPS. The Extracellular segment spans residues 545–553; it reads KLSFLSNGE. Residues 554-571 traverse the membrane as a helical; Voltage-sensor segment; the sequence is WIRYLLLGRMLRLTRILL. Topologically, residues 572-595 are cytoplasmic; that stretch reads QVRRFRAFVATFFTLMSSLMPYLG. A helical membrane pass occupies residues 596–616; that stretch reads IVFCTLCIYCSLGLQIFGGIV. The Extracellular segment spans residues 617–640; sequence YAGNPTLEETDLFSNDYLLFNFND. Residues 641–655 constitute an intramembrane region (pore-forming); it reads YPSGMVTLFNLLVMG. Over 656 to 676 the chain is Extracellular; that stretch reads NWQAWMESYRQLTGSYWSLIY. The helical transmembrane segment at 677–697 threads the bilayer; that stretch reads FVSFYLISVLLLLNLIVAFVL. Topologically, residues 698–757 are cytoplasmic; the sequence is EAFFAEMELEKDGEADIQDPTLEGRNRRRSVRVRTKGTMVDILLHHMLSNELDGSQNRDQ.

The protein belongs to the calcium channel alpha-1 subunit (TC 1.A.1.11) family. Two pore calcium channel subfamily. Homodimer. In terms of tissue distribution, expressed in shoot, mature leaf, cultured cells, and at lower level in roots.

Its subcellular location is the membrane. Its activity is regulated as follows. Inhibited by the VDCC blocker verapamil in yeast cells. Channel activity may be down-regulated by cytosolic Ca(2+) in rice cells. Inhibited by Al(3+). May function as one of the major voltage-gated Ca(2+) channel (VDCC) across the plasma membrane. May be involved in the regulation of cytosolic Ca(2+) and in growth and development. Acts as the major ROS-responsive Ca(2+) channel and is the possible target of Al-dependent inhibition. Determines sensitivity to T.viride xylanase elicitor. Plays a regulatory role in elicitor-induced defense responses and hypersensitive cell death. This is Two pore calcium channel protein 1 (TPC1) from Oryza sativa subsp. japonica (Rice).